The primary structure comprises 148 residues: UPF0178 protein SH2212 (148 aa).

This sequence belongs to the UPF0178 family.

The protein is UPF0178 protein SH2212 of Staphylococcus haemolyticus (strain JCSC1435).